The primary structure comprises 598 residues: Chaperone protein DnaK (598 aa).

Threonine 180 carries the phosphothreonine; by autocatalysis modification.

The protein belongs to the heat shock protein 70 family.

Acts as a chaperone. This chain is Chaperone protein DnaK, found in Thermosipho africanus (strain TCF52B).